A 621-amino-acid chain; its full sequence is MIQEKKKFDAEVGKILNLMIHSLYSNKEIFMRELISNASDACDKLRYLSQSNSELVAGDSNFKITVKVDKDNGQIIIRDNGIGMNKDDLIENLGTIARSGTANFLKSLSGDSKKDNMLIGQFGVGFYSSFMVADKVTVTSRKAGEDKVHIWESDGLGEYTVSDSDKEFTRGTEIILHIKKEEDTFLDHFRLKHIVKSYSDHIAVPIYFFDEAGNNEIQLNSASALWTRPKSEITEEQYKEFYKSLSYAIDDPWITMHNKNEGAIEFTNLLFIPSSKTFDLFHPDRKRRVKLYIKRVFISDENIDLIPSYLRFLRGVVDSEDLPLNISRESLQHNSVLEKIKNAITKRVLGELRKKKEESPEEYNKFWANFGGALKEGLCEATTNHEKLLEVCIFRSALHNKMISLDEYIANFKEGQSTIYYLSGDNPDKLLSSPQIEGLLSKKIDVLLFTDTVDDFWVNVNSKYKEHAIKSATRSDIDVEQTTSQSEAKNTDSKKSDDEYKLLTDYFKETLGELVKEVKISKKLTSSPACLAVSDAAMDIRMERFLIEQKQIANASAKNLELNPKNKIIEKIFNDLKANNKNNEELVNLIFDQACILEGEPVADTGAFSKRLNDIVQKAIL.

The interval methionine 1 to arginine 328 is a; substrate-binding. The interval glutamate 329–arginine 544 is b. A disordered region spans residues serine 475–lysine 494. Residues phenylalanine 545–leucine 621 form a c region.

This sequence belongs to the heat shock protein 90 family. As to quaternary structure, homodimer.

Its subcellular location is the cytoplasm. Functionally, molecular chaperone. Has ATPase activity. This is Chaperone protein HtpG from Rickettsia rickettsii (strain Iowa).